Consider the following 1048-residue polypeptide: MPITSSPDLFYLNDCDVVYWYDLTRLVCHYVNLTERDLLANEREKFLTSLDLLTAQITYVYMLFRNLRLVEDSFKKTLKKLIYTLSRFSINANIWFHSTLFEEREAIASQKDPERRSPLLQSILGTFQKFHFLLRLLHFLSNPNELTILPQLTPRFFKDSFNTISWNNPFLRKRLNQHMSHDLPRQMIKAVAGASGIVAENIDEIPASKQGTSCSSETSHHSPSAPFQRRRRGTIFSNVSGSSDESDTIWSKRKKPYPLNEETLSLVRARKKQLDGKLKQMIKSANEYLSNTANFSKMLNFEMNFKTYEEVSGTIPIIDILENLDLTIFLNLRELGDENRVFDEDVAIDDEDEEFLKHSLSSLSYILSDYFNMKQYFHDVVVKFIIVAQHLTLEDPFVFSPMQNDLPTGYYEPMKPSSLNLDNAKDKKNGSQNTDIQEEEDEYEPDPDSLILFHNLINQDSDFNDLKFFNLAHVFKKSCDDYFDVLKLAIEFVNQLILERENLLNYAARMMKNNITELLLRGEEGYGSYDGGETAEKSDTNAVYADSDTKDNDEWRDSQVKLPRYLQREYDSELIWGSNNRIKGGSKHALISYLTDNEKKDLFFDITFLITFRSIFTTTEFLSYLISQYNLDPPEDLCFEEYNEWVTKKLIPVKCRVVEIMTTFFKQYWFLGYDEPDLATLNLDYFAQVAIKENITGSVELLKEVNQKFKHGNIQEATAPMKTLDQQICQDHYSGTLYSTTESILAVDPVLFATQLTILEHEIYCEITIFDCLQKIWKNKYTKSYGASPGLNEFISFANKLTNFISYSVVKEADKSKRAKLLSHFIFIAEYCRKFNNFSSMTAIISALYSSPIYRLEKTWQAVIPQTRDLLQSLNKLMDPKKNFINYRNELKSLHSAPCVPFFGVYLSDLTFTDSGNPDYLVLEHGLKGVHDEKKYINFNKRSRLVDILQEIIYFKKTHYDFTKDRTVIECISNSLENIPHIEKQYQLSLIIEPKPRKKVVPNSNSNNKSQEKSRDDQTDEGKTSTKKDRFPKFQLHKTKKKAPKVSK.

Disordered regions lie at residues 208–242 (SKQGTSCSSETSHHSPSAPFQRRRRGTIFSNVSGS) and 419–444 (LNLDNAKDKKNGSQNTDIQEEEDEYE). A compositionally biased stretch (low complexity) spans 212-224 (TSCSSETSHHSPS). Positions 578–710 (SNNRIKGGSK…LLKEVNQKFK (133 aa)) constitute an N-terminal Ras-GEF domain. Positions 748 to 995 (DPVLFATQLT…YQLSLIIEPK (248 aa)) constitute a Ras-GEF domain. The segment at 997 to 1048 (RKKVVPNSNSNNKSQEKSRDDQTDEGKTSTKKDRFPKFQLHKTKKKAPKVSK) is disordered. The span at 1010–1032 (SQEKSRDDQTDEGKTSTKKDRFP) shows a compositional bias: basic and acidic residues. The segment covering 1035–1048 (QLHKTKKKAPKVSK) has biased composition (basic residues).

Promotes the exchange of Ras-bound GDP by GTP. The polypeptide is Putative truncated guanine nucleotide exchange factor SDC25 (SDC25) (Saccharomyces cerevisiae (strain ATCC 204508 / S288c) (Baker's yeast)).